The primary structure comprises 817 residues: Transcription factor SPT20 homolog-like 2 (817 aa).

Positions M1–N14 are enriched in basic and acidic residues. 5 disordered regions span residues M1–Y28, P249–V275, P369–R553, P598–A630, and Q675–S697. Positions S423–T440 are enriched in polar residues. Composition is skewed to low complexity over residues S469–S479, P494–P505, A513–P531, and P598–G618.

The protein belongs to the SPT20 family.

In Homo sapiens (Human), this protein is Transcription factor SPT20 homolog-like 2 (SUPT20HL2).